A 1062-amino-acid polypeptide reads, in one-letter code: Carbamoyl phosphate synthase large chain (1062 aa).

The segment at 1-401 (MPKRTDIHKI…AMQKAVRSLE (401 aa)) is carboxyphosphate synthetic domain. Residues Arg129, Arg169, Gly175, Gly176, Lys208, Ile210, Glu215, Gly241, Ile242, His243, Gln284, and Glu298 each contribute to the ATP site. In terms of domain architecture, ATP-grasp 1 spans 133-327 (KELCKELGEP…IAKMAAKIAI (195 aa)). Positions 284, 298, and 300 each coordinate Mg(2+). Gln284, Glu298, and Asn300 together coordinate Mn(2+). An oligomerization domain region spans residues 402–546 (IDEKDLYSET…YSTYDGENES (145 aa)). The interval 547-929 (HKSGKKSVIV…ALYKAFAGAK (383 aa)) is carbamoyl phosphate synthetic domain. The 191-residue stretch at 671–861 (DQIIKKLKLN…MAQVATRVIM (191 aa)) folds into the ATP-grasp 2 domain. Positions 707, 746, 748, 752, 777, 778, 779, 780, 820, and 832 each coordinate ATP. Mg(2+) is bound by residues Gln820, Glu832, and Asn834. Mn(2+)-binding residues include Gln820, Glu832, and Asn834. Residues 930–1062 (MQLPENGNVL…NRSFATDALK (133 aa)) enclose the MGS-like domain. The tract at residues 930–1062 (MQLPENGNVL…NRSFATDALK (133 aa)) is allosteric domain.

This sequence belongs to the CarB family. In terms of assembly, composed of two chains; the small (or glutamine) chain promotes the hydrolysis of glutamine to ammonia, which is used by the large (or ammonia) chain to synthesize carbamoyl phosphate. Tetramer of heterodimers (alpha,beta)4. It depends on Mg(2+) as a cofactor. Requires Mn(2+) as cofactor.

The enzyme catalyses hydrogencarbonate + L-glutamine + 2 ATP + H2O = carbamoyl phosphate + L-glutamate + 2 ADP + phosphate + 2 H(+). The catalysed reaction is hydrogencarbonate + NH4(+) + 2 ATP = carbamoyl phosphate + 2 ADP + phosphate + 2 H(+). It functions in the pathway amino-acid biosynthesis; L-arginine biosynthesis; carbamoyl phosphate from bicarbonate: step 1/1. The protein operates within pyrimidine metabolism; UMP biosynthesis via de novo pathway; (S)-dihydroorotate from bicarbonate: step 1/3. Large subunit of the glutamine-dependent carbamoyl phosphate synthetase (CPSase). CPSase catalyzes the formation of carbamoyl phosphate from the ammonia moiety of glutamine, carbonate, and phosphate donated by ATP, constituting the first step of 2 biosynthetic pathways, one leading to arginine and/or urea and the other to pyrimidine nucleotides. The large subunit (synthetase) binds the substrates ammonia (free or transferred from glutamine from the small subunit), hydrogencarbonate and ATP and carries out an ATP-coupled ligase reaction, activating hydrogencarbonate by forming carboxy phosphate which reacts with ammonia to form carbamoyl phosphate. This chain is Carbamoyl phosphate synthase large chain, found in Lactobacillus johnsonii (strain CNCM I-12250 / La1 / NCC 533).